The following is a 61-amino-acid chain: Large ribosomal subunit protein uL30 (61 aa).

Belongs to the universal ribosomal protein uL30 family. Part of the 50S ribosomal subunit.

The polypeptide is Large ribosomal subunit protein uL30 (Legionella pneumophila (strain Paris)).